Reading from the N-terminus, the 328-residue chain is Transcription factor bHLH84 (328 aa).

The interval 145–248 is disordered; that stretch reads QCESSKKRTR…ASRGAATDPQ (104 aa). Residues 220-229 are compositionally biased toward basic and acidic residues; it reads LSKEDGEDSK. Positions 243–292 constitute a bHLH domain; the sequence is AATDPQSLYARKRRERINERLRILQHLVPNGTKVDISTMLEEAVQYVKFL.

This sequence belongs to the bHLH protein family. As to quaternary structure, homodimer.

Its subcellular location is the nucleus. The polypeptide is Transcription factor bHLH84 (BHLH84) (Arabidopsis thaliana (Mouse-ear cress)).